Consider the following 342-residue polypeptide: Transcription initiation factor TFIID subunit 12 (342 aa).

Positions 1–221 (MKMEEFSPPT…QAPPPQMIPA (221 aa)) are disordered. Polar residues predominate over residues 12–35 (PNNHVIVQANPQIAAALSTNSPMQ). Low complexity-rich tracts occupy residues 39 to 59 (PPQG…VGQP), 67 to 89 (PMRM…QMRA), 96 to 146 (QQQQ…HLMG), and 180 to 192 (QQIM…QQHQ). The span at 193-218 (QPPPSQQIQQPPIPQPQQQQAPPPQM) shows a compositional bias: pro residues. The Histone-fold domain occupies 230–297 (EKSKLDDLMQ…EFILKNVYNM (68 aa)).

Belongs to the TAF12 family. As to quaternary structure, interacts (via histone-fold domain) with taf-4 (via the histone-fold domain). Interaction may facilitate the nuclear localization of taf-4.

It is found in the nucleus. In terms of biological role, part of the general transcription factor complex TFIID. Plays a role in recruiting taf-4 to the nucleus and thereby activating transcription initiation by RNA polymerase II, as part of the TFIID complex. The sequence is that of Transcription initiation factor TFIID subunit 12 from Caenorhabditis elegans.